An 88-amino-acid chain; its full sequence is LYR motif-containing protein 2 (88 aa).

The transit peptide at 1 to 19 (MAASRLPPATLTLKQFMRR) directs the protein to the mitochondrion.

This sequence belongs to the complex I LYR family.

The protein resides in the mitochondrion. Functionally, involved in efficient integration of the N-module into mitochondrial respiratory chain complex I. In Rattus norvegicus (Rat), this protein is LYR motif-containing protein 2 (Lyrm2).